The sequence spans 199 residues: Holliday junction branch migration complex subunit RuvA (199 aa).

The segment at 1–64 (MIALLTGKLA…EDAINLYGFR (64 aa)) is domain I. Residues 65 to 143 (TQQEKELFQL…KLGLAQPQAG (79 aa)) are domain II. The segment at 144 to 148 (GATAP) is flexible linker. Residues 149-199 (AKQEIRDDVLSALINLGYKEAVVQKALAELKVTEDATVELVLKQALKILMK) form a domain III region.

It belongs to the RuvA family. As to quaternary structure, homotetramer. Forms an RuvA(8)-RuvB(12)-Holliday junction (HJ) complex. HJ DNA is sandwiched between 2 RuvA tetramers; dsDNA enters through RuvA and exits via RuvB. An RuvB hexamer assembles on each DNA strand where it exits the tetramer. Each RuvB hexamer is contacted by two RuvA subunits (via domain III) on 2 adjacent RuvB subunits; this complex drives branch migration. In the full resolvosome a probable DNA-RuvA(4)-RuvB(12)-RuvC(2) complex forms which resolves the HJ.

It localises to the cytoplasm. Its function is as follows. The RuvA-RuvB-RuvC complex processes Holliday junction (HJ) DNA during genetic recombination and DNA repair, while the RuvA-RuvB complex plays an important role in the rescue of blocked DNA replication forks via replication fork reversal (RFR). RuvA specifically binds to HJ cruciform DNA, conferring on it an open structure. The RuvB hexamer acts as an ATP-dependent pump, pulling dsDNA into and through the RuvAB complex. HJ branch migration allows RuvC to scan DNA until it finds its consensus sequence, where it cleaves and resolves the cruciform DNA. The protein is Holliday junction branch migration complex subunit RuvA of Geobacter sp. (strain M21).